The following is a 129-amino-acid chain: Small ribosomal subunit protein uS11 (129 aa).

Residues 108-129 form a disordered region; sequence EDVTPIPHDGTKPKGGKRGRRV.

It belongs to the universal ribosomal protein uS11 family. As to quaternary structure, part of the 30S ribosomal subunit.

Located on the platform of the 30S subunit. The polypeptide is Small ribosomal subunit protein uS11 (Methanothrix thermoacetophila (strain DSM 6194 / JCM 14653 / NBRC 101360 / PT) (Methanosaeta thermophila)).